The sequence spans 717 residues: Fatty acid oxidation complex subunit alpha (717 aa).

The segment at 1–189 (MIYQSPTIEV…KVGAIDAVVA (189 aa)) is enoyl-CoA hydratase/isomerase. Residue D296 participates in substrate binding. Residues 311-717 (KKVNSAAVLG…ANNGSYYQQA (407 aa)) form a 3-hydroxyacyl-CoA dehydrogenase region. Residues M324, D343, 400–402 (VVE), K407, and S429 each bind NAD(+). The For 3-hydroxyacyl-CoA dehydrogenase activity role is filled by H450. An NAD(+)-binding site is contributed by N453. Substrate-binding residues include N500 and Y660.

It in the N-terminal section; belongs to the enoyl-CoA hydratase/isomerase family. This sequence in the C-terminal section; belongs to the 3-hydroxyacyl-CoA dehydrogenase family. Heterotetramer of two alpha chains (FadB) and two beta chains (FadA).

The enzyme catalyses a (3S)-3-hydroxyacyl-CoA + NAD(+) = a 3-oxoacyl-CoA + NADH + H(+). It carries out the reaction a (3S)-3-hydroxyacyl-CoA = a (2E)-enoyl-CoA + H2O. The catalysed reaction is a 4-saturated-(3S)-3-hydroxyacyl-CoA = a (3E)-enoyl-CoA + H2O. It catalyses the reaction (3S)-3-hydroxybutanoyl-CoA = (3R)-3-hydroxybutanoyl-CoA. The enzyme catalyses a (3Z)-enoyl-CoA = a 4-saturated (2E)-enoyl-CoA. It carries out the reaction a (3E)-enoyl-CoA = a 4-saturated (2E)-enoyl-CoA. The protein operates within lipid metabolism; fatty acid beta-oxidation. In terms of biological role, involved in the aerobic and anaerobic degradation of long-chain fatty acids via beta-oxidation cycle. Catalyzes the formation of 3-oxoacyl-CoA from enoyl-CoA via L-3-hydroxyacyl-CoA. It can also use D-3-hydroxyacyl-CoA and cis-3-enoyl-CoA as substrate. The sequence is that of Fatty acid oxidation complex subunit alpha from Shewanella halifaxensis (strain HAW-EB4).